Consider the following 232-residue polypeptide: Myb-related protein 308 (232 aa).

HTH myb-type domains follow at residues 9 to 61 (KAHT…INYL) and 62 to 116 (RPDL…RRKL). 2 DNA-binding regions (H-T-H motif) span residues 37-61 (WRSL…INYL) and 89-112 (WSLI…NTHI).

As to expression, expressed in roots, stems, leaves, seed pods and flowers.

It localises to the nucleus. Its function is as follows. Transcription factor. The chain is Myb-related protein 308 from Antirrhinum majus (Garden snapdragon).